Consider the following 226-residue polypeptide: 3-dehydroquinate dehydratase (226 aa).

Residues 29–31 (EFR) and R56 each bind 3-dehydroquinate. Catalysis depends on H120, which acts as the Proton donor/acceptor. K146 (schiff-base intermediate with substrate) is an active-site residue. Residues R187, T208, and Q212 each contribute to the 3-dehydroquinate site.

The protein belongs to the type-I 3-dehydroquinase family. Homodimer.

The catalysed reaction is 3-dehydroquinate = 3-dehydroshikimate + H2O. It functions in the pathway metabolic intermediate biosynthesis; chorismate biosynthesis; chorismate from D-erythrose 4-phosphate and phosphoenolpyruvate: step 3/7. Its function is as follows. Involved in the third step of the chorismate pathway, which leads to the biosynthesis of aromatic amino acids. Catalyzes the cis-dehydration of 3-dehydroquinate (DHQ) and introduces the first double bond of the aromatic ring to yield 3-dehydroshikimate. The protein is 3-dehydroquinate dehydratase of Halobacterium salinarum (strain ATCC 700922 / JCM 11081 / NRC-1) (Halobacterium halobium).